A 387-amino-acid chain; its full sequence is Chorismate synthase (387 aa).

2 residues coordinate NADP(+): Arg-39 and Arg-45. Positions 92 to 113 are disordered; it reads PVEEGSEEKRRVSRPRPGHADL. FMN is bound by residues 130 to 132, 250 to 251, Gly-295, 310 to 314, and Arg-336; these read RSS, QA, and KPIPT.

The protein belongs to the chorismate synthase family. In terms of assembly, homotetramer. Requires FMNH2 as cofactor.

The enzyme catalyses 5-O-(1-carboxyvinyl)-3-phosphoshikimate = chorismate + phosphate. The protein operates within metabolic intermediate biosynthesis; chorismate biosynthesis; chorismate from D-erythrose 4-phosphate and phosphoenolpyruvate: step 7/7. In terms of biological role, catalyzes the anti-1,4-elimination of the C-3 phosphate and the C-6 proR hydrogen from 5-enolpyruvylshikimate-3-phosphate (EPSP) to yield chorismate, which is the branch point compound that serves as the starting substrate for the three terminal pathways of aromatic amino acid biosynthesis. This reaction introduces a second double bond into the aromatic ring system. This is Chorismate synthase from Brevibacillus brevis (strain 47 / JCM 6285 / NBRC 100599).